Reading from the N-terminus, the 765-residue chain is ATP-dependent RNA helicase DBP4 (765 aa).

Positions Ser48–Lys76 match the Q motif motif. In terms of domain architecture, Helicase ATP-binding spans Ile79–Ile253. Ala92–Thr99 contributes to the ATP binding site. Residues Asp201 to Asp204 carry the DEAD box motif. The Helicase C-terminal domain maps to Ser267–Cys439. 2 stretches are compositionally biased toward basic and acidic residues: residues Lys655–Lys668 and Pro720–Asn738. Residues Lys655–Asn765 are disordered. Residues Val744–Glu756 show a composition bias toward acidic residues.

It belongs to the DEAD box helicase family. DDX10/DBP4 subfamily. Interacts with the U3 and U14 snoRNAs. Associates with pre-ribosomal complexes.

The protein resides in the nucleus. It localises to the nucleolus. The enzyme catalyses ATP + H2O = ADP + phosphate + H(+). Its function is as follows. ATP-dependent RNA helicase required for ribosome biogenesis. Involved in the release of U14 snoRNA in pre-ribosomal complexes. Required for pre-rRNA cleavage at site A2. The sequence is that of ATP-dependent RNA helicase DBP4 (DBP4) from Candida albicans (strain SC5314 / ATCC MYA-2876) (Yeast).